The chain runs to 169 residues: uncharacterized protein (169 aa).

4 N-linked (GlcNAc...) asparagine; by host glycosylation sites follow: N13, N29, N39, and N48. Positions 109-111 match the Cell attachment site motif; the sequence is RGD. N135 carries N-linked (GlcNAc...) asparagine; by host glycosylation. Residues 145 to 165 form a helical membrane-spanning segment; it reads IYHMAIVYILIMYQIYILSLI.

It localises to the membrane. This is an uncharacterized protein from Acanthamoeba polyphaga (Amoeba).